The chain runs to 185 residues: Peptidyl-tRNA hydrolase (185 aa).

A tRNA-binding site is contributed by Y14. H19 functions as the Proton acceptor in the catalytic mechanism. Positions 65, 67, and 113 each coordinate tRNA.

This sequence belongs to the PTH family. In terms of assembly, monomer.

The protein localises to the cytoplasm. It carries out the reaction an N-acyl-L-alpha-aminoacyl-tRNA + H2O = an N-acyl-L-amino acid + a tRNA + H(+). Functionally, hydrolyzes ribosome-free peptidyl-tRNAs (with 1 or more amino acids incorporated), which drop off the ribosome during protein synthesis, or as a result of ribosome stalling. Its function is as follows. Catalyzes the release of premature peptidyl moieties from peptidyl-tRNA molecules trapped in stalled 50S ribosomal subunits, and thus maintains levels of free tRNAs and 50S ribosomes. This chain is Peptidyl-tRNA hydrolase, found in Rickettsia typhi (strain ATCC VR-144 / Wilmington).